We begin with the raw amino-acid sequence, 91 residues long: Signal recognition particle 19 kDa protein (91 aa).

Belongs to the SRP19 family. In terms of assembly, part of the signal recognition particle protein translocation system, which is composed of SRP and FtsY. Archaeal SRP consists of a 7S RNA molecule of 300 nucleotides and two protein subunits: SRP54 and SRP19.

It localises to the cytoplasm. In terms of biological role, involved in targeting and insertion of nascent membrane proteins into the cytoplasmic membrane. Binds directly to 7S RNA and mediates binding of the 54 kDa subunit of the SRP. The protein is Signal recognition particle 19 kDa protein of Methanothermobacter thermautotrophicus (strain ATCC 29096 / DSM 1053 / JCM 10044 / NBRC 100330 / Delta H) (Methanobacterium thermoautotrophicum).